The sequence spans 580 residues: Amino-acid acetyltransferase, mitochondrial (580 aa).

The N-acetyltransferase domain maps to Leu403 to Asp560.

This sequence belongs to the acetyltransferase family.

It localises to the mitochondrion. The catalysed reaction is L-glutamate + acetyl-CoA = N-acetyl-L-glutamate + CoA + H(+). It functions in the pathway amino-acid biosynthesis; L-arginine biosynthesis; N(2)-acetyl-L-ornithine from L-glutamate: step 1/4. Its function is as follows. N-acetylglutamate synthase involved in arginine biosynthesis. In Candida albicans (strain SC5314 / ATCC MYA-2876) (Yeast), this protein is Amino-acid acetyltransferase, mitochondrial (ARG2).